We begin with the raw amino-acid sequence, 471 residues long: Ammonium transporter Rh type B (471 aa).

Over 1–13 (MAGSPSRAAGRRL) the chain is Cytoplasmic. A helical transmembrane segment spans residues 14 to 33 (QLPLLSFLQGATAVLFAVFV). Topologically, residues 34 to 60 (RYNHKTDAALWHRGNHSNADNEFYFRY) are extracellular. N48 carries N-linked (GlcNAc...) asparagine glycosylation. A helical membrane pass occupies residues 61-81 (PSFQDVHAMVFVGFGFLMVFL). Residues 82–85 (QRYG) lie on the Cytoplasmic side of the membrane. The helical transmembrane segment at 86–106 (FSSVGFTFLLAAFALQWSTLV) threads the bilayer. Residues 107–123 (QGFLHSFHGGHIHVGVE) are Extracellular-facing. The helical transmembrane segment at 124-144 (SMINADFCAGAVLISFGAVLG) threads the bilayer. Topologically, residues 145-148 (KTGP) are cytoplasmic. The helical transmembrane segment at 149–169 (AQLLLMALLEVVLFGINEFVL) threads the bilayer. The Extracellular segment spans residues 170-177 (LHLLGVRD). Residues 178 to 200 (AGGSMTIHTFGAYFGLVLSQVLY) form a helical membrane-spanning segment. The Cytoplasmic portion of the chain corresponds to 201-217 (RPQLEKSKHRQGLYHSD). A helical membrane pass occupies residues 218–238 (LFAMIGTIFLWIFWPSFNAAL). Residues 239 to 249 (TSLGAGQHRTA) lie on the Extracellular side of the membrane. The helical transmembrane segment at 250-270 (LNTYYSLAASTLGTFALSALV) threads the bilayer. Over 271-280 (GEDGRLDMVH) the chain is Cytoplasmic. Residues 281 to 301 (IQNAALAGRVVVGTSSEMMLT) traverse the membrane as a helical segment. Residue P302 is a topological domain, extracellular. The helical transmembrane segment at 303-323 (FGALAAGFLAGTVSTLGYKFF) threads the bilayer. Residues 324–344 (TPILESKFKVQDTCGVHNLHG) lie on the Cytoplasmic side of the membrane. Residues 345–365 (MPGVLGVLLGVLVAGLATHEA) traverse the membrane as a helical segment. Residues 366-391 (YGDGLESVFPLIAEGQRSATSQAMYQ) lie on the Extracellular side of the membrane. The helical transmembrane segment at 392–412 (LFGLFVTLMFASVGGGLGGLL) threads the bilayer. Residues 413–471 (LKLPFLDSPPDSQCYEDQVHWQAPGATLSPLPTPAFQVPGEHEDKAQRPLRVEEADTQA) lie on the Cytoplasmic side of the membrane. The tract at residues 414-422 (KLPFLDSPP) is interaction with ANK3. The Basolateral sorting signal motif lies at 427-430 (YEDQ). Residues 437–471 (GATLSPLPTPAFQVPGEHEDKAQRPLRVEEADTQA) are disordered. Residues 452–471 (GEHEDKAQRPLRVEEADTQA) are compositionally biased toward basic and acidic residues.

The protein belongs to the ammonium transporter (TC 2.A.49) family. Rh subfamily. Interacts (via C-terminus) with ANK2 and ANK3; required for targeting to the basolateral membrane. In terms of processing, N-glycosylated.

The protein localises to the cell membrane. The protein resides in the basolateral cell membrane. The catalysed reaction is NH4(+)(in) = NH4(+)(out). It catalyses the reaction methylamine(out) = methylamine(in). The enzyme catalyses CO2(out) = CO2(in). In terms of biological role, ammonium transporter involved in the maintenance of acid-base homeostasis. Transports ammonium and its related derivative methylammonium across the basolateral plasma membrane of epithelial cells likely contributing to renal transepithelial ammonia transport and ammonia metabolism. May transport either NH4(+) or NH3 ammonia species predominantly mediating an electrogenic NH4(+) transport. May act as a CO2 channel providing for renal acid secretion. The polypeptide is Ammonium transporter Rh type B (RHBG) (Pongo pygmaeus (Bornean orangutan)).